Here is a 384-residue protein sequence, read N- to C-terminus: MAALVVRGVRDMLKRADFATVPRRQRHKKKWASTEPKFPATRLALQNFDMTYSVQFGDLWPSIRVSLLSEQKYGALVNNFAAGDRVSAELEQLKARDFVNEAVFHREPEPENSQTAAPSPASWACSPNLRCFTFTRGDVSRFPPARLGSLGLMDYYLMDAASLLPVLALGLQPGDTVLDLCAAPGGKTLALLQTGCCRNLAANDLSTSRTSRLQRVLHSYVPQDVRDKNRVRVTSWDGRKWGELEGDTYDRVLVDVPCTTDRHSLHEEENSIFQRSRKKERQMLPVLQVQLLAAGLLATKPGGHIVYSTCSLSHLQNEYVVQGAIELLDNQYSIKVQVEDLTHFRKLFMNTFSFFPSCQVGELVIPNLMANFGPMYFCKMCRMT.

A mitochondrion-targeting transit peptide spans 1-25 (MAALVVRGVRDMLKRADFATVPRRQ). S-adenosyl-L-methionine-binding residues include Gly-185, Gly-186, Lys-187, and Asp-204. Ser-206 is modified (phosphoserine). Residues Arg-209, Asp-237, Gly-238, and Asp-255 each contribute to the S-adenosyl-L-methionine site. The active-site Nucleophile is Cys-310.

This sequence belongs to the class I-like SAM-binding methyltransferase superfamily. RsmB/NOP family. As to quaternary structure, heterodimer with MTERFD2/MTERF4; this interaction seems to be required for NSUN4 recruitment to the mitochondrial large ribosomal subunit.

Its subcellular location is the mitochondrion. It carries out the reaction a cytidine in rRNA + S-adenosyl-L-methionine = a 5-methylcytidine in rRNA + S-adenosyl-L-homocysteine + H(+). It catalyses the reaction a cytidine in mRNA + S-adenosyl-L-methionine = a 5-methylcytidine in mRNA + S-adenosyl-L-homocysteine + H(+). Its function is as follows. Mitochondrial RNA cytosine C(5)-methyltransferase that methylates cytosine to 5-methylcytosine (m5C) in various RNAs, such as rRNAs, mRNAs and some long non-coding RNAs (lncRNAs). Involved in mitochondrial ribosome small subunit (SSU) maturation by catalyzing methylation of mitochondrial 12S rRNA; the function is independent of MTERFD2/MTERF4 and assembled mitochondrial ribosome large subunit (LSU). Targeted to LSU by MTERFD2/MTERF4 and probably is involved in a final step in ribosome biogenesis to ensure that SSU and LSU are assembled. In vitro can methylate 16S rRNA of the LSU; the methylation is enhanced by MTERFD/MTERF4. Also acts as a regulator of innate immunity by marking double-stranded mitochondrial RNAs(mt-dsRNAs) generated in response to stress: catalyzes m5C modification on mitochondrial RNAs, such as a mRNAs and lncRNAs, with a preference for the termini of light-strand lncRNAs, promoting their degradation and cytosolic release. Modified light-strand lncRNAs are then recognized by C1QBP reader and recruited to the mitochondrial degradosome complex, which promotes their degradation. This Bos taurus (Bovine) protein is 5-cytosine rRNA methyltransferase NSUN4 (NSUN4).